Consider the following 462-residue polypeptide: Integrator complex subunit 12 (462 aa).

The interval 42-132 (GIDSSYRPSQ…PETQSSPITV (91 aa)) is disordered. The span at 59 to 86 (ISSTKNISIKQEPKISSSLPSGNNNGKV) shows a compositional bias: polar residues. A Glycyl lysine isopeptide (Lys-Gly) (interchain with G-Cter in SUMO2) cross-link involves residue K68. Over residues 88–124 (TTEKVKKEAEKRPADKMKSDITEGVDIPKKPRLEKPE) the composition is skewed to basic and acidic residues. S128 bears the Phosphoserine mark. The PHD-type zinc finger occupies 159-215 (GLACVVCRQMMVASGNQLVECQECHNLYHRDCHKPQVTDKEANDPRLVWYCARCTRQ). A Glycyl lysine isopeptide (Lys-Gly) (interchain with G-Cter in SUMO2) cross-link involves residue K254. Over residues 301–328 (SSAGPSTAKLSSTTQNNTGKPATSSANQ) the composition is skewed to polar residues. The interval 301–462 (SSAGPSTAKL…KKAAQKKLKK (162 aa)) is disordered. 2 stretches are compositionally biased toward low complexity: residues 347–358 (KIGSNNSTTPTV) and 382–437 (VSKV…GPTS). Positions 449 to 462 (QMVKKKAAQKKLKK) are enriched in basic residues.

It belongs to the Integrator subunit 12 family. Component of the Integrator complex, composed of core subunits INTS1, INTS2, INTS3, INTS4, INTS5, INTS6, INTS7, INTS8, INTS9/RC74, INTS10, INTS11/CPSF3L, INTS12, INTS13, INTS14 and INTS15. The core complex associates with protein phosphatase 2A subunits PPP2CA and PPP2R1A, to form the Integrator-PP2A (INTAC) complex. In terms of processing, dephosphorylated at Ser-128 by the PNUTS-PP1 complex, promoting RNA polymerase II transcription pause-release.

The protein resides in the nucleus. Component of the integrator complex, a multiprotein complex that terminates RNA polymerase II (Pol II) transcription in the promoter-proximal region of genes. The integrator complex provides a quality checkpoint during transcription elongation by driving premature transcription termination of transcripts that are unfavorably configured for transcriptional elongation: the complex terminates transcription by (1) catalyzing dephosphorylation of the C-terminal domain (CTD) of Pol II subunit POLR2A/RPB1 and SUPT5H/SPT5, (2) degrading the exiting nascent RNA transcript via endonuclease activity and (3) promoting the release of Pol II from bound DNA. The integrator complex is also involved in terminating the synthesis of non-coding Pol II transcripts, such as enhancer RNAs (eRNAs), small nuclear RNAs (snRNAs), telomerase RNAs and long non-coding RNAs (lncRNAs). Mediates recruitment of cytoplasmic dynein to the nuclear envelope, probably as component of the integrator complex. The sequence is that of Integrator complex subunit 12 (INTS12) from Pongo abelii (Sumatran orangutan).